A 1498-amino-acid chain; its full sequence is Mitogen-activated protein kinase kinase kinase nsy-1 (1498 aa).

Disordered stretches follow at residues 1–35 and 190–209; these read MSQNNKRQVQHNHEMSNDVCPLPLPPRGAPPPTAY and LQSYDKNNNDDDSKPPFART. Residues 22 to 33 show a composition bias toward pro residues; it reads LPLPPRGAPPPT. In terms of domain architecture, Protein kinase spans 664-925; that stretch reads SNERVVLGKG…AKDLLQDPFI (262 aa). ATP-binding positions include 670–678 and Lys693; that span reads LGKGTYGTV. The Proton acceptor role is filled by Asp790. The interval 1022 to 1050 is disordered; that stretch reads IDHARNRTFSSSSPVPDGQSSAGTNMSHP. Residues 1031-1042 are compositionally biased toward low complexity; that stretch reads SSSSPVPDGQSS. Residues 1276–1314 adopt a coiled-coil conformation; it reads SREERVREDRKELRTLQEENEILIERLLQVERELNAQLK. The tract at residues 1461-1498 is disordered; it reads QPVFLSPMRSRDDSLDDYHSSSADDMYTGAAAETSSGN. The segment covering 1469–1479 has biased composition (basic and acidic residues); the sequence is RSRDDSLDDYH.

Belongs to the protein kinase superfamily. STE Ser/Thr protein kinase family. MAP kinase kinase kinase subfamily. In terms of assembly, interacts with unc-43. Interacts with sek-1. Requires Mg(2+) as cofactor. In terms of processing, may be phosphorylated upon pathogenic bacterial infection. May be regulated by proteasomal degradation mediated by the E3-ubiquitin ligase rle-1. Expressed in intestine, hypodermis, rectal gland cell and neurons including sensory AWC neurons.

It localises to the cell projection. Its subcellular location is the axon. The protein resides in the perikaryon. It catalyses the reaction L-seryl-[protein] + ATP = O-phospho-L-seryl-[protein] + ADP + H(+). It carries out the reaction L-threonyl-[protein] + ATP = O-phospho-L-threonyl-[protein] + ADP + H(+). In terms of biological role, serine/threonine-protein kinase which, by phosphorylating and activating sek-1, plays an important role in the activation of the p38 pathway also composed of the downstream effectors sek-1 and pmk-1. Downstream of CaMKII unc-43 and adapter protein tir-1, plays a role in determining asymmetric cell fates in olfactory AWC neurons during neuronal development. Activation results in the repression of odorant receptor str-2 expression in one of the 2 AWC neurons. Involved in resistance to pathogenic Gram-positive and Gram-negative bacterial and fungal infection. Involved in resistance to the nematotoxic C.cinerea galectin Cgl2. Probably by activating the sek1/pmk-1/skn-1 pathway, involved in the up-regulation of gcs-1 and glutathione-S-transferase gst-4 expression upon bacterial infection. Probably downstream of tir-1 and nipi-3, required for the expression of antimicrobial peptide nlp-29 in the epidermis in response to fungal infection or physical injury. Plays a role in resistance to several environmental stresses including oxidative, protein misfolding (ER) and osmotic stresses, and DNA-damaging reagents. Plays a role in the stabilization of transcription factor rnt-1 in the intestine during oxidative stress. Involved in germline apoptosis induced by heavy metals, such as Cu(2+). In addition, plays a role in the up-regulation of gcs-1 upon arsenite treatment, most likely through activation of pmk-1, to confer protection against toxicity induced by heavy metals. Plays a role downstream of tir-1 in regulating susceptibility to anoxia. Involved in egg laying. The chain is Mitogen-activated protein kinase kinase kinase nsy-1 from Caenorhabditis elegans.